The following is a 1487-amino-acid chain: MIRLGAPQTLVLLTLLVAAVLRCQGQDVQEAGSCVQDGQRYNDKDVWKPEPCRICVCDTGTVLCDDIICEDVKDCLSPEIPFGECCPICPTDLATASGQPGPKGQKGEPGDIKDIVGPKGPPGPQGPAGEQGPRGDRGDKGEKGAPGPRGRDGEPGTPGNPGPPGPPGPPGPPGLGGNFAAQMAGGFDEKAGGAQLGVMQGPMGPMGPRGPPGPAGAPGPQGFQGNPGEPGEPGVSGPMGPRGPPGPPGKPGDDGEAGKPGKAGERGPPGPQGARGFPGTPGLPGVKGHRGYPGLDGAKGEAGAPGVKGESGSPGENGSPGPMGPRGLPGERGRTGPAGAAGARGNDGQPGPAGPPGPVGPAGGPGFPGAPGAKGEAGPTGARGPEGAQGPRGEPGTPGSPGPAGASGNPGTDGIPGAKGSAGAPGIAGAPGFPGPRGPPGPQGATGPLGPKGQTGEPGIAGFKGEQGPKGEPGPAGPQGAPGPAGEEGKRGARGEPGGVGPIGPPGERGAPGNRGFPGQDGLAGPKGAPGERGPSGLAGPKGANGDPGRPGEPGLPGARGLTGRPGDAGPQGKVGPSGAPGEDGRPGPPGPQGARGQPGVMGFPGPKGANGEPGKAGEKGLPGAPGLRGLPGKDGETGAAGPPGPAGPAGERGEQGAPGPSGFQGLPGPPGPPGEGGKPGDQGVPGEAGAPGLVGPRGERGFPGERGSPGAQGLQGPRGLPGTPGTDGPKGASGPAGPPGAQGPPGLQGMPGERGAAGIAGPKGDRGDVGEKGPEGAPGKDGGRGLTGPIGPPGPAGANGEKGEVGPPGPAGSAGARGAPGERGETGPPGPAGFAGPPGADGQPGAKGEQGEAGQKGDAGAPGPQGPSGAPGPQGPTGVTGPKGARGAQGPPGATGFPGAAGRVGPPGSNGNPGPPGPPGPSGKDGPKGARGDSGPPGRAGEPGLQGPAGPPGEKGEPGDDGPSGAEGPPGPQGLAGQRGIVGLPGQRGERGFPGLPGPSGEPGKQGAPGASGDRGPPGPVGPPGLTGPAGEPGREGSPGADGPPGRDGAAGVKGDRGETGAVGAPGAPGPPGSPGPAGPTGKQGDRGEAGAQGPMGPSGPAGARGIQGPQGPRGDKGEAGEPGERGLKGHRGFTGLQGLPGPPGPSGDQGASGPAGPSGPRGPPGPVGPSGKDGANGIPGPIGPPGPRGRSGETGPAGPPGNPGPPGPPGPPGPGIDMSAFAGLGPREKGPDPLQYMRADQAAGGLRQHDAEVDATLKSLNNQIESIRSPEGSRKNPARTCRDLKLCHPEWKSGDYWIDPNQGCTLDAMKVFCNMETGETCVYPNPANVPKKNWWSSKSKEKKHIWFGETINGGFHFSYGDDNLAPNTANVQMTFLRLLSTEGSQNITYHCKNSIAYLDEAAGNLKKALLIQGSNDVEIRAEGNSRFTYTALKDGCTKHTGKWGKTVIEYRSQKTSRLPIIDIAPMDIGGPEQEFGVDIGPVCFL.

The signal sequence occupies residues 1 to 25 (MIRLGAPQTLVLLTLLVAAVLRCQG). The propeptide at 26 to 181 (QDVQEAGSCV…PPGLGGNFAA (156 aa)) is N-terminal propeptide. A VWFC domain is found at 32-90 (GSCVQDGQRYNDKDVWKPEPCRICVCDTGTVLCDDIICEDVKDCLSPEIPFGECCPICP). A disordered region spans residues 97–1237 (SGQPGPKGQK…PREKGPDPLQ (1141 aa)). Basic and acidic residues-rich tracts occupy residues 105-116 (QKGEPGDIKDIV) and 133-154 (PRGDRGDKGEKGAPGPRGRDGE). Pro residues predominate over residues 158-173 (PGNPGPPGPPGPPGPP). Residue Lys190 is modified to 5-hydroxylysine. Lys190 carries an O-linked (Gal...) hydroxylysine glycan. The segment at 201 to 1214 (GPMGPMGPRG…PGPPGPPGPP (1014 aa)) is triple-helical region. Residues 208 to 217 (PRGPPGPAGA) are compositionally biased toward pro residues. Low complexity predominate over residues 218–239 (PGPQGFQGNPGEPGEPGVSGPM). The segment covering 241 to 250 (PRGPPGPPGK) has biased composition (pro residues). Basic and acidic residues predominate over residues 251–265 (PGDDGEAGKPGKAGE). A 5-hydroxylysine mark is found at Lys287, Lys299, and Lys308. O-linked (Gal...) hydroxylysine glycosylation is found at Lys287, Lys299, and Lys308. 2 stretches are compositionally biased toward low complexity: residues 310 to 320 (ESGSPGENGSP) and 335 to 350 (TGPAGAAGARGNDGQP). Over residues 360 to 369 (GPAGGPGFPG) the composition is skewed to gly residues. Composition is skewed to low complexity over residues 370–382 (APGAKGEAGPTGA) and 391–431 (PRGE…AGAP). Lys374 is subject to 5-hydroxylysine. O-linked (Gal...) hydroxylysine glycosylation occurs at Lys374. Residues 433–442 (FPGPRGPPGP) show a composition bias toward pro residues. Lys608 and Lys620 each carry 5-hydroxylysine. O-linked (Gal...) hydroxylysine glycans are attached at residues Lys608 and Lys620. 2 stretches are compositionally biased toward low complexity: residues 622-631 (LPGAPGLRGL) and 656-667 (QGAPGPSGFQGL). 2 positions are modified to 4-hydroxyproline: Pro659 and Pro668. Pro670 carries the 3-hydroxyproline modification. A 4-hydroxyproline mark is found at Pro671 and Pro674. Over residues 764-775 (KGDRGDVGEKGP) the composition is skewed to basic and acidic residues. 2 stretches are compositionally biased toward low complexity: residues 833 to 848 (AGFAGPPGADGQPGAK) and 877 to 913 (PTGVTGPKGARGAQGPPGATGFPGAAGRVGPPGSNGN). Residue Pro907 is modified to 3-hydroxyproline. 4-hydroxyproline is present on residues Pro908, Pro914, and Pro920. A compositionally biased stretch (pro residues) spans 1069 to 1079 (APGPPGSPGPA). Residues 1115-1129 (RGDKGEAGEPGERGL) show a composition bias toward basic and acidic residues. Lys1130 is subject to 5-hydroxylysine. O-linked (Gal...) hydroxylysine glycosylation occurs at Lys1130. Pro1144 carries the post-translational modification 3-hydroxyproline. Positions 1148–1157 (SGDQGASGPA) are enriched in low complexity. The residue at position 1181 (Pro1181) is a 4-hydroxyproline. Pro1186 carries the post-translational modification 3-hydroxyproline. The residue at position 1187 (Pro1187) is a 4-hydroxyproline. Pro residues predominate over residues 1199–1216 (AGPPGNPGPPGPPGPPGP). The residue at position 1201 (Pro1201) is a 3-hydroxyproline. Pro1202 and Pro1205 each carry 4-hydroxyproline. Residue Pro1207 is modified to 3-hydroxyproline. Residues Pro1208 and Pro1211 each carry the 4-hydroxyproline modification. Position 1213 is a 3-hydroxyproline (Pro1213). Pro1214 bears the 4-hydroxyproline mark. A nonhelical region (C-terminal) region spans residues 1215–1241 (GPGIDMSAFAGLGPREKGPDPLQYMRA). Positions 1253–1487 (AEVDATLKSL…GVDIGPVCFL (235 aa)) constitute a Fibrillar collagen NC1 domain. Intrachain disulfides connect Cys1283-Cys1315, Cys1323-Cys1485, and Cys1393-Cys1438. Ca(2+) is bound by residues Asp1301, Asn1303, Gln1304, Cys1306, and Asp1309. Asn1388 is a glycosylation site (N-linked (GlcNAc...) asparagine).

The protein belongs to the fibrillar collagen family. In terms of assembly, homotrimers of alpha 1(II) chains. Post-translationally, the N-telopeptide is covalently linked to the helical COL2 region of alpha 1(IX), alpha 2(IX) and alpha 3(IX) chain. The C-telopeptide is covalently linked to an another site in the helical region of alpha 3(IX) COL2. In terms of processing, contains mostly 4-hydroxyproline. Prolines at the third position of the tripeptide repeating unit (G-X-P) are 4-hydroxylated in some or all of the chains. Contains 3-hydroxyproline at a few sites. This modification occurs on the first proline residue in the sequence motif Gly-Pro-Hyp, where Hyp is 4-hydroxyproline. Post-translationally, lysine residues at the third position of the tripeptide repeating unit (G-X-Y) are 5-hydroxylated in some or all of the chains. In terms of processing, O-glycosylated on hydroxylated lysine residues. The O-linked glycan consists of a Glc-Gal disaccharide. Isoform 2 is highly expressed in juvenile chondrocyte and low in fetal chondrocyte.

The protein resides in the secreted. The protein localises to the extracellular space. It is found in the extracellular matrix. Functionally, type II collagen is specific for cartilaginous tissues. It is essential for the normal embryonic development of the skeleton, for linear growth and for the ability of cartilage to resist compressive forces. The polypeptide is Collagen alpha-1(II) chain (Homo sapiens (Human)).